We begin with the raw amino-acid sequence, 615 residues long: ATP-dependent RNA helicase mrh4, mitochondrial (615 aa).

The transit peptide at 1 to 37 (MLRPKAGKCLLCSFRAAQKPVSQKWPSRALSMRTRLP) directs the protein to the mitochondrion. The interval 21 to 108 (VSQKWPSRAL…HRDRDDKKDR (88 aa)) is disordered. The segment covering 90-108 (QERRTSRLDHRDRDDKKDR) has biased composition (basic and acidic residues). Positions 138–171 (QSFEQFALLDSVKQAIFQQALPELKEHVPTPVQR) match the Q motif motif. The region spanning 184-395 (RRPKSEMEQY…RKRFPDINRL (212 aa)) is the Helicase ATP-binding domain. Residue 197–204 (AETGSGKT) coordinates ATP. The short motif at 342 to 345 (DEAD) is the DEAD box element. One can recognise a Helicase C-terminal domain in the interval 444–615 (PVKGLMDVKR…EGMFEGKALI (172 aa)).

It belongs to the DEAD box helicase family. MRH4 subfamily.

The protein localises to the mitochondrion. The enzyme catalyses ATP + H2O = ADP + phosphate + H(+). ATP-binding RNA helicase involved in mitochondrial RNA metabolism. Required for maintenance of mitochondrial DNA. The polypeptide is ATP-dependent RNA helicase mrh4, mitochondrial (mrh4) (Sclerotinia sclerotiorum (strain ATCC 18683 / 1980 / Ss-1) (White mold)).